Here is a 432-residue protein sequence, read N- to C-terminus: D-amino acid dehydrogenase (432 aa).

FAD is bound at residue 3 to 17 (VLVLGGGVIGVTSAY).

It belongs to the DadA oxidoreductase family. Requires FAD as cofactor.

The enzyme catalyses a D-alpha-amino acid + A + H2O = a 2-oxocarboxylate + AH2 + NH4(+). The protein operates within amino-acid degradation; D-alanine degradation; NH(3) and pyruvate from D-alanine: step 1/1. Its function is as follows. Oxidative deamination of D-amino acids. This chain is D-amino acid dehydrogenase, found in Delftia acidovorans (strain DSM 14801 / SPH-1).